We begin with the raw amino-acid sequence, 506 residues long: Probable Xaa-Pro aminopeptidase BDCG_04966 (506 aa).

The Mn(2+) site is built by D285, D296, E433, and E471.

This sequence belongs to the peptidase M24B family. Requires Mn(2+) as cofactor.

The enzyme catalyses Release of any N-terminal amino acid, including proline, that is linked to proline, even from a dipeptide or tripeptide.. Functionally, catalyzes the removal of a penultimate prolyl residue from the N-termini of peptides. This Ajellomyces dermatitidis (strain ER-3 / ATCC MYA-2586) (Blastomyces dermatitidis) protein is Probable Xaa-Pro aminopeptidase BDCG_04966.